The following is a 163-amino-acid chain: Photosystem II extrinsic protein V (163 aa).

The N-terminal stretch at Met-1–Ala-26 is a signal peptide. Heme c-binding residues include Cys-63, Cys-66, His-67, and His-118.

Belongs to the cytochrome c family. PsbV subfamily. PSII is composed of 1 copy each of membrane proteins PsbA, PsbB, PsbC, PsbD, PsbE, PsbF, PsbH, PsbI, PsbJ, PsbK, PsbL, PsbM, PsbT, PsbY, PsbZ, Psb30/Ycf12, at least 3 peripheral proteins of the oxygen-evolving complex and a large number of cofactors. It forms dimeric complexes. The extrinsic subunits in red algae are PsbO (OEC33), PsbQ', cytochrome c-550 and PsbU. Requires heme c as cofactor.

The protein resides in the plastid. Its subcellular location is the chloroplast thylakoid membrane. Its function is as follows. One of the extrinsic, lumenal subunits of photosystem II (PSII). PSII is a light-driven water plastoquinone oxidoreductase, using light energy to abstract electrons from H(2)O, generating a proton gradient subsequently used for ATP formation. The extrinsic proteins stabilize the structure of photosystem II oxygen-evolving complex (OEC), the ion environment of oxygen evolution and protect the OEC against heat-induced inactivation. In Pyropia yezoensis (Susabi-nori), this protein is Photosystem II extrinsic protein V.